The sequence spans 313 residues: Ribosomal RNA small subunit methyltransferase H (313 aa).

S-adenosyl-L-methionine-binding positions include 36-38, D56, F80, D102, and Q109; that span reads GGH.

It belongs to the methyltransferase superfamily. RsmH family.

The protein resides in the cytoplasm. The catalysed reaction is cytidine(1402) in 16S rRNA + S-adenosyl-L-methionine = N(4)-methylcytidine(1402) in 16S rRNA + S-adenosyl-L-homocysteine + H(+). Its function is as follows. Specifically methylates the N4 position of cytidine in position 1402 (C1402) of 16S rRNA. The chain is Ribosomal RNA small subunit methyltransferase H from Actinobacillus pleuropneumoniae serotype 7 (strain AP76).